Reading from the N-terminus, the 105-residue chain is Large ribosomal subunit protein uL18c (105 aa).

The protein belongs to the universal ribosomal protein uL18 family. As to quaternary structure, part of the 50S ribosomal subunit; contacts the 5S rRNA.

Its subcellular location is the plastid. It is found in the chloroplast. Binds 5S rRNA, forms part of the central protuberance of the 50S subunit. The polypeptide is Large ribosomal subunit protein uL18c (rpl18) (Cyanidium caldarium (Red alga)).